A 419-amino-acid polypeptide reads, in one-letter code: Nodulation protein NoeE (419 aa).

In terms of biological role, required for the formation of sulfated nod factor. Proposed to transfer activated sulfate (PAPS) to the fucose of the nod factor. The protein is Nodulation protein NoeE (noeE) of Sinorhizobium fredii (strain NBRC 101917 / NGR234).